The sequence spans 130 residues: Large ribosomal subunit protein bL12 (130 aa).

It belongs to the bacterial ribosomal protein bL12 family. As to quaternary structure, homodimer. Part of the ribosomal stalk of the 50S ribosomal subunit. Forms a multimeric L10(L12)X complex, where L10 forms an elongated spine to which 2 to 4 L12 dimers bind in a sequential fashion. Binds GTP-bound translation factors.

Its function is as follows. Forms part of the ribosomal stalk which helps the ribosome interact with GTP-bound translation factors. Is thus essential for accurate translation. The protein is Large ribosomal subunit protein bL12 of Cutibacterium acnes (strain DSM 16379 / KPA171202) (Propionibacterium acnes).